The sequence spans 334 residues: Glycerol-3-phosphate dehydrogenase [NAD(P)+] (334 aa).

Positions 14, 15, 35, and 109 each coordinate NADPH. 3 residues coordinate sn-glycerol 3-phosphate: lysine 109, glycine 138, and threonine 140. Alanine 142 provides a ligand contact to NADPH. Sn-glycerol 3-phosphate is bound by residues lysine 194, aspartate 247, serine 257, arginine 258, and asparagine 259. The active-site Proton acceptor is lysine 194. Residue arginine 258 participates in NADPH binding. NADPH-binding residues include valine 282 and glutamate 284.

This sequence belongs to the NAD-dependent glycerol-3-phosphate dehydrogenase family.

Its subcellular location is the cytoplasm. The enzyme catalyses sn-glycerol 3-phosphate + NAD(+) = dihydroxyacetone phosphate + NADH + H(+). It carries out the reaction sn-glycerol 3-phosphate + NADP(+) = dihydroxyacetone phosphate + NADPH + H(+). Its pathway is membrane lipid metabolism; glycerophospholipid metabolism. Its function is as follows. Catalyzes the reduction of the glycolytic intermediate dihydroxyacetone phosphate (DHAP) to sn-glycerol 3-phosphate (G3P), the key precursor for phospholipid synthesis. In Tolumonas auensis (strain DSM 9187 / NBRC 110442 / TA 4), this protein is Glycerol-3-phosphate dehydrogenase [NAD(P)+].